A 646-amino-acid chain; its full sequence is Galactofuranosyltransferase GlfT2 (646 aa).

Residues arginine 182, glutamine 211, asparagine 240, and aspartate 267 each contribute to the UDP-alpha-D-galactofuranose site. Aspartate 267 and aspartate 269 together coordinate Mn(2+). The active-site Proton acceptor is the aspartate 384. Histidine 408 provides a ligand contact to Mn(2+).

The protein belongs to the glycosyltransferase 2 family. Homotetramer. It depends on Mn(2+) as a cofactor. Mg(2+) is required as a cofactor.

It localises to the cell membrane. The enzyme catalyses beta-D-galactofuranosyl-(1-&gt;5)-beta-D-galactofuranosyl-(1-&gt;4)-alpha-L-rhamnosyl-(1-&gt;3)-N-acetyl-alpha-D-glucosaminyl-diphospho-trans,octa-cis-decaprenol + 28 UDP-alpha-D-galactofuranose = [beta-D-galactofuranosyl-(1-&gt;5)-beta-D-galactofuranosyl-(1-&gt;6)]14-beta-D-galactofuranosyl-(1-&gt;5)-beta-D-galactofuranosyl-(1-&gt;4)-alpha-L-rhamnopyranosyl-(1-&gt;3)-N-acetyl-alpha-D-glucosaminyl-diphospho-trans,octa-cis-decaprenol + 28 UDP + 28 H(+). Its pathway is cell wall biogenesis; cell wall polysaccharide biosynthesis. In terms of biological role, involved in the galactan polymerization of the arabinogalactan (AG) region of the mycolylarabinogalactan-peptidoglycan (mAGP) complex, an essential component of the mycobacteria cell wall. Thus, successively transfers approximately 28 galactofuranosyl (Galf) residues from UDP-galactofuranose (UDP-Galf) onto the galactofuranosyl-galactofuranosyl-rhamnosyl-GlcNAc-diphospho-decaprenol (Galf-Galf-Rha-GlcNAc-PP-C50) acceptor produced by GlfT1, with alternating 1-&gt;5 and 1-&gt;6 links, forming a galactan domain with approximately 30 galactofuranosyl residues. The polypeptide is Galactofuranosyltransferase GlfT2 (Mycolicibacterium smegmatis (strain ATCC 700084 / mc(2)155) (Mycobacterium smegmatis)).